The sequence spans 343 residues: MSQDLDQIVADAQAAFAAANDNATLENEKARFLGKTGALTELLKGLGKLDPETRKSEGARINQVKQQVEAALQARRQALADALMNARLAAEAIDVTLPGRAVARGSLHPVMRTWERVEQIFGSIGFDVADGPEIETDWMNFTALNNPDNHPARSMQDTFYVDGRDSEDKLLLLRTHTSPMQVRYARMHVEKYAGKAMPPIKVICPGRTYRVDSDATHSPMFNQVEGLWIGEDVSFADLKGVYTDFLRKFFERDDIQVRFRPSYFPFTEPSAEIDMAFGNGKWLEISGSGQVHPNVLRNMGLDPERYIGFAFGSGLERLTMLRYGINDLRLFFEGDVRFLRQFA.

Residue E268 participates in Mg(2+) binding.

The protein belongs to the class-II aminoacyl-tRNA synthetase family. Phe-tRNA synthetase alpha subunit type 1 subfamily. As to quaternary structure, tetramer of two alpha and two beta subunits. Mg(2+) is required as a cofactor.

The protein resides in the cytoplasm. It catalyses the reaction tRNA(Phe) + L-phenylalanine + ATP = L-phenylalanyl-tRNA(Phe) + AMP + diphosphate + H(+). The protein is Phenylalanine--tRNA ligase alpha subunit of Cupriavidus taiwanensis (strain DSM 17343 / BCRC 17206 / CCUG 44338 / CIP 107171 / LMG 19424 / R1) (Ralstonia taiwanensis (strain LMG 19424)).